Reading from the N-terminus, the 75-residue chain is Metallothionein-like protein 1 (75 aa).

This sequence belongs to the metallothionein superfamily. Type 15 family.

Its function is as follows. Metallothioneins have a high content of cysteine residues that bind various heavy metals. The chain is Metallothionein-like protein 1 (ALI1) from Triticum aestivum (Wheat).